The chain runs to 72 residues: NAD(P)H-quinone oxidoreductase subunit O (72 aa).

The protein belongs to the complex I NdhO subunit family. In terms of assembly, NDH-1 can be composed of about 15 different subunits; different subcomplexes with different compositions have been identified which probably have different functions.

Its subcellular location is the cellular thylakoid membrane. The enzyme catalyses a plastoquinone + NADH + (n+1) H(+)(in) = a plastoquinol + NAD(+) + n H(+)(out). The catalysed reaction is a plastoquinone + NADPH + (n+1) H(+)(in) = a plastoquinol + NADP(+) + n H(+)(out). Its function is as follows. NDH-1 shuttles electrons from an unknown electron donor, via FMN and iron-sulfur (Fe-S) centers, to quinones in the respiratory and/or the photosynthetic chain. The immediate electron acceptor for the enzyme in this species is believed to be plastoquinone. Couples the redox reaction to proton translocation, and thus conserves the redox energy in a proton gradient. Cyanobacterial NDH-1 also plays a role in inorganic carbon-concentration. This chain is NAD(P)H-quinone oxidoreductase subunit O, found in Rippkaea orientalis (strain PCC 8801 / RF-1) (Cyanothece sp. (strain PCC 8801)).